Reading from the N-terminus, the 408-residue chain is Neutral cholesterol ester hydrolase 1 (408 aa).

Residues 1-4 (MRSS) lie on the Cytoplasmic side of the membrane. A helical; Signal-anchor for type II membrane protein transmembrane segment spans residues 5 to 25 (CVLLAALLALVAYYVYIPLPS). At 26-408 (AVSDPWKLML…SYFKWLDQNL (383 aa)) the chain is on the lumenal side. The Involved in the stabilization of the negatively charged intermediate by the formation of the oxyanion hole signature appears at 113–115 (HGG). Residue Ser-191 is part of the active site. The N-linked (GlcNAc...) asparagine glycan is linked to Asn-270. Residue Asp-348 is part of the active site. The N-linked (GlcNAc...) asparagine glycan is linked to Asn-367. His-378 is a catalytic residue. Asn-389 carries an N-linked (GlcNAc...) asparagine glycan.

The protein belongs to the 'GDXG' lipolytic enzyme family. N-glycosylated.

The protein localises to the cell membrane. Its subcellular location is the microsome. It carries out the reaction a 1-O-alkyl-2-acetyl-sn-glycerol + H2O = a 1-O-alkyl-sn-glycerol + acetate + H(+). It catalyses the reaction 1-O-hexadecyl-2-acetyl-sn-glycerol + H2O = 1-O-hexadecyl-sn-glycerol + acetate + H(+). The enzyme catalyses a cholesterol ester + H2O = cholesterol + a fatty acid + H(+). The catalysed reaction is cholesteryl (9Z-octadecenoate) + H2O = cholesterol + (9Z)-octadecenoate + H(+). Its function is as follows. Hydrolyzes 2-acetyl monoalkylglycerol ether (1-O-alkyl-2-acetyl-sn-glycerol), the penultimate precursor of the pathway for de novo synthesis of platelet-activating factor. May be responsible for the hydrolysis of cholesterol esters (such as cholesteryl (9Z-octadecenoate)) in macrophages. Also involved in organ detoxification by hydrolyzing exogenous organophosphorus compounds. This chain is Neutral cholesterol ester hydrolase 1 (Nceh1), found in Rattus norvegicus (Rat).